A 237-amino-acid polypeptide reads, in one-letter code: 2,3-bisphosphoglycerate-dependent phosphoglycerate mutase (237 aa).

Substrate contacts are provided by residues 8 to 15, 21 to 22, R60, 87 to 90, K98, 114 to 115, and 180 to 181; these read RHGQSAWN, TG, ERHY, RR, and GN. H9 acts as the Tele-phosphohistidine intermediate in catalysis. E87 acts as the Proton donor/acceptor in catalysis.

It belongs to the phosphoglycerate mutase family. BPG-dependent PGAM subfamily. Homodimer.

It catalyses the reaction (2R)-2-phosphoglycerate = (2R)-3-phosphoglycerate. Its pathway is carbohydrate degradation; glycolysis; pyruvate from D-glyceraldehyde 3-phosphate: step 3/5. Functionally, catalyzes the interconversion of 2-phosphoglycerate and 3-phosphoglycerate. The sequence is that of 2,3-bisphosphoglycerate-dependent phosphoglycerate mutase from Hyphomonas neptunium (strain ATCC 15444).